Consider the following 234-residue polypeptide: tRNA1(Val) (adenine(37)-N6)-methyltransferase (234 aa).

This sequence belongs to the methyltransferase superfamily. tRNA (adenine-N(6)-)-methyltransferase family.

The protein resides in the cytoplasm. It catalyses the reaction adenosine(37) in tRNA1(Val) + S-adenosyl-L-methionine = N(6)-methyladenosine(37) in tRNA1(Val) + S-adenosyl-L-homocysteine + H(+). In terms of biological role, specifically methylates the adenine in position 37 of tRNA(1)(Val) (anticodon cmo5UAC). The polypeptide is tRNA1(Val) (adenine(37)-N6)-methyltransferase (Aliivibrio salmonicida (strain LFI1238) (Vibrio salmonicida (strain LFI1238))).